Reading from the N-terminus, the 169-residue chain is uncharacterized protein (169 aa).

This is an uncharacterized protein from Autographa californica nuclear polyhedrosis virus (AcMNPV).